We begin with the raw amino-acid sequence, 188 residues long: GTPase KRas (188 aa).

Residues 10-18 (GAGGVGKSA), 29-35 (VDEYDPT), 59-60 (AG), and 116-119 (NKCD) contribute to the GTP site. The short motif at 32–40 (YDPTIEDSY) is the Effector region element. The disordered stretch occupies residues 167–188 (KEKMSKEGKKKKKKSKTKCILM). At cysteine 185 the chain carries Cysteine methyl ester. The S-farnesyl cysteine moiety is linked to residue cysteine 185. The propeptide at 186 to 188 (ILM) is removed in mature form.

It belongs to the small GTPase superfamily. Ras family.

The protein localises to the cell membrane. Its subcellular location is the cytoplasm. The catalysed reaction is GTP + H2O = GDP + phosphate + H(+). Alternates between an inactive form bound to GDP and an active form bound to GTP. Activated by a guanine nucleotide-exchange factor (GEF) and inactivated by a GTPase-activating protein (GAP). Ras proteins bind GDP/GTP and possess intrinsic GTPase activity. Plays an important role in the regulation of cell proliferation. This Oryzias latipes (Japanese rice fish) protein is GTPase KRas (kras1).